The sequence spans 166 residues: Interferon gamma-related (166 aa).

Positions 1-26 (MYCRLNMVYLICALLLIVSLQGTVGA) are cleaved as a signal peptide. Residue Asn91 is glycosylated (N-linked (GlcNAc...) asparagine).

This sequence belongs to the type II (or gamma) interferon family. In terms of assembly, homodimer. As to expression, strongly expressed in spleen. Also detected at lower levels in gill, kidney, heart, brain and intestine. In immune cell populations, expressed at highest levels in peripheral blood leukocytes and at lower levels in splenocytes, granulocytes, monocytes and macrophages.

It is found in the secreted. Its function is as follows. Cytokine which binds to interferon gamma receptor 1 (ifngr1). Has activating effects on primary macrophages. Induces nitric oxide production and phagocytic responses in macrophages. Primes monocytes for production of reactive oxygen intermediates (ROI), although the effect is short-lived. Also has inhibitory effects on monocyte priming by ifng1 (interferon gamma 1) and tnfb (TNF-alpha 2). Stimulates phosphorylation of the JAK/STAT signal transducer stat1, but fails to induce stat1 nuclear localization. Promotes increased expression of a number of genes important for macrophage activity, including the interferon regulatory factors irf2 and irf9. The polypeptide is Interferon gamma-related (Carassius auratus (Goldfish)).